The chain runs to 648 residues: Copper methylamine oxidase (648 aa).

A propeptide spanning residues 1 to 9 (MTLNAESEA) is cleaved from the precursor. 299 to 310 (AFDSGEYNIGNM) serves as a coordination point for substrate. Asp-301 serves as the catalytic Proton acceptor. Residues Cys-320 and Cys-346 are joined by a disulfide bond. Substrate is bound at residue 382 to 387 (VANYEY). The Schiff-base intermediate with substrate; via topaquinone role is filled by Tyr-385. Tyr-385 carries the post-translational modification 2',4',5'-topaquinone. Positions 436 and 438 each coordinate Cu cation. Residues Asp-445, Phe-446, and Asp-584 each contribute to the Mn(2+) site. His-595 contacts Cu cation. Residues 629–648 (PTSTSTTQTGEADTCCHTDK) form a disordered region.

This sequence belongs to the copper/topaquinone oxidase family. Homodimer. The cofactor is Cu cation. Requires Zn(2+) as cofactor. L-topaquinone is required as a cofactor. Mn(2+) serves as cofactor. Topaquinone (TPQ) is generated by copper-dependent autoxidation of a specific tyrosyl residue.

It catalyses the reaction a primary methyl amine + O2 + H2O = an aldehyde + H2O2 + NH4(+). The chain is Copper methylamine oxidase (maoII) from Arthrobacter sp. (strain P1).